Here is a 1361-residue protein sequence, read N- to C-terminus: Protein transport protein SEC16B homolog (1361 aa).

Ser46 carries the post-translational modification Phosphoserine. Disordered regions lie at residues 82 to 109 (NEGA…HSDA), 487 to 513 (VDDA…GRPP), 984 to 1013 (PVGG…QEAT), 1025 to 1062 (SSLM…GRTP), 1163 to 1204 (ENKS…ARGR), 1216 to 1235 (NPPG…VQTA), and 1306 to 1361 (SVNG…EVEL). A compositionally biased stretch (low complexity) spans 491 to 503 (PQSFQSSQLFSPS). The segment covering 996 to 1013 (TKGNLQGNEYQHQQQEAT) has biased composition (polar residues). 3 stretches are compositionally biased toward polar residues: residues 1169–1200 (IPSN…NQFS), 1222–1234 (NSHT…SVQT), and 1308–1325 (NGDN…SWSG). Residues 1326-1354 (NFNTSFTPPTSPSTFKPVLLNSSSSSLGE) show a composition bias toward low complexity.

The protein belongs to the SEC16 family.

The protein resides in the golgi apparatus. Its subcellular location is the endoplasmic reticulum. Its function is as follows. Required for protein transport from the endoplasmic reticulum to the Golgi apparatus. This chain is Protein transport protein SEC16B homolog, found in Arabidopsis thaliana (Mouse-ear cress).